Here is a 139-residue protein sequence, read N- to C-terminus: Probable trafficking protein particle complex subunit 2 (139 aa).

It belongs to the TRAPP small subunits family. Sedlin subfamily. In terms of assembly, part of the multisubunit TRAPP (transport protein particle) complex.

Its subcellular location is the cytoplasm. It localises to the perinuclear region. The protein localises to the endoplasmic reticulum. It is found in the golgi apparatus. May play a role in vesicular transport from endoplasmic reticulum to Golgi. Involved in dsRNA uptake. This Drosophila melanogaster (Fruit fly) protein is Probable trafficking protein particle complex subunit 2.